Here is a 450-residue protein sequence, read N- to C-terminus: Class E vacuolar protein-sorting machinery protein HSE1 (450 aa).

The VHS domain occupies 15–145; it reads ATDGKLRSDN…RIRRKWPGLL (131 aa). Disordered regions lie at residues 141-167, 179-212, and 374-450; these read WPGL…EDQE, FEKS…QTTS, and PNTQ…PPNY. A compositionally biased stretch (basic and acidic residues) spans 147-167; sequence EPEKPSKQKVSHQEATDEDQE. Positions 163–182 constitute a UIM domain; it reads DEDQELQRALKMSLEEFEKS. Residues 184–196 show a composition bias toward polar residues; sequence QQSNGSAVQSNSL. The segment covering 197–209 has biased composition (low complexity); sequence QDHNQGQQQPQQQ. The 60-residue stretch at 212-271 folds into the SH3 domain; it reads SGIRRVRALYDLNANEQDELSFRKGDVIVVLEQVYRDWWRGSLHGKIGIFPLNYVTPITE. The segment covering 394-432 has biased composition (low complexity); it reads NNTYQTTNGQYTQHNITPQQQYQVPSQNYQSQPPSMQSN.

Belongs to the STAM family. In terms of assembly, component of the ESCRT-0 complex composed of HSE1 and VPS27.

It is found in the endosome membrane. Component of the ESCRT-0 complex which is the sorting receptor for ubiquitinated cargo proteins at the multivesicular body (MVB). This is Class E vacuolar protein-sorting machinery protein HSE1 (HSE1) from Candida glabrata (strain ATCC 2001 / BCRC 20586 / JCM 3761 / NBRC 0622 / NRRL Y-65 / CBS 138) (Yeast).